The sequence spans 788 residues: Bifunctional purine biosynthetic protein ADE1 (788 aa).

The GARS stretch occupies residues 1–430 (MEPIIALLIG…DIAHHALNPK (430 aa)). Residues 115-321 (KDFMHRNNIP…LAEIILACVN (207 aa)) enclose the ATP-grasp domain. 141–202 (LDTCTFDVVI…EELLEGEELS (62 aa)) contacts ATP. Positions 291 and 293 each coordinate Mg(2+). The tract at residues 437–769 (LTYENSGVSV…TVYRIGQLVD (333 aa)) is AIRS.

It in the N-terminal section; belongs to the GARS family. In the C-terminal section; belongs to the AIR synthase family. Mg(2+) is required as a cofactor. It depends on Mn(2+) as a cofactor.

The protein resides in the cytoplasm. The protein localises to the cytosol. It catalyses the reaction 5-phospho-beta-D-ribosylamine + glycine + ATP = N(1)-(5-phospho-beta-D-ribosyl)glycinamide + ADP + phosphate + H(+). The enzyme catalyses 2-formamido-N(1)-(5-O-phospho-beta-D-ribosyl)acetamidine + ATP = 5-amino-1-(5-phospho-beta-D-ribosyl)imidazole + ADP + phosphate + H(+). The protein operates within purine metabolism; IMP biosynthesis via de novo pathway; 5-amino-1-(5-phospho-D-ribosyl)imidazole from N(2)-formyl-N(1)-(5-phospho-D-ribosyl)glycinamide: step 2/2. Its pathway is purine metabolism; IMP biosynthesis via de novo pathway; N(1)-(5-phospho-D-ribosyl)glycinamide from 5-phospho-alpha-D-ribose 1-diphosphate: step 2/2. In terms of biological role, catalyzes the second and fifth step in the 'de novo' purine biosynthesis pathway; contains phosphoribosylamine--glycine ligase (GARS) and phosphoribosylformylglycinamidine cyclo-ligase (AIRS) activities. The protein is Bifunctional purine biosynthetic protein ADE1 of Schizosaccharomyces pombe (strain 972 / ATCC 24843) (Fission yeast).